The primary structure comprises 504 residues: Cytoplasmic dynein 1 light intermediate chain 1 (504 aa).

An ATP-binding site is contributed by 35–42; that stretch reads GDPTSGKS. 3 stretches are compositionally biased toward low complexity: residues 167-189, 392-425, and 437-446; these read TTTAATTTTTTTSNNIENNTNKT, NSPSTPSPLSQSSNNNNSNNNINNTSTPSINTPL, and SSNNPVAASP. Disordered stretches follow at residues 167–195, 383–446, and 464–504; these read TTTAATTTTTTTSNNIENNTNKTSPTTDK, LDND…AASP, and DKTS…QQKK. A compositionally biased stretch (basic and acidic residues) spans 464–473; that stretch reads DKTSSRKDLK. A compositionally biased stretch (polar residues) spans 475 to 487; that stretch reads SLASPPTTSVSSN. Over residues 488–504 the composition is skewed to basic and acidic residues; the sequence is AREDAKKELDKLKQQKK.

The protein belongs to the dynein light intermediate chain family. Homodimer. The cytoplasmic dynein 1 complex consists of two catalytic heavy chains (HCs) and a number of non-catalytic subunits presented by intermediate chains (ICs), light intermediate chains (LICs) and light chains (LCs).

It localises to the cytoplasm. The protein localises to the cytoskeleton. Functionally, acts as one of several non-catalytic accessory components of the cytoplasmic dynein 1 complex that are thought to be involved in linking dynein to cargos and to adapter proteins that regulate dynein function. Cytoplasmic dynein 1 acts as a motor for the intracellular retrograde motility of vesicles and organelles along microtubules. May play a role in binding dynein to membranous organelles or chromosomes. This Dictyostelium discoideum (Social amoeba) protein is Cytoplasmic dynein 1 light intermediate chain 1 (dync1li1).